We begin with the raw amino-acid sequence, 200 residues long: MQLSGRRVICVRGGREVFAGLDFEAVSGEAVAVVGRNGSGKTSLLRLIAGLLIPAGGTIALDGGDAELTLPEQCHYLGHRDALKPALSVAENLSFWADFLGGERLDAHESLATVGLDHATHLPAAFLSAGQRRRLSLARLLTVRRPIWLLDEPTTALDVAGQDMFGGLMRDHLARGGLIIAATHMALGIDSRELRIGGVA.

In terms of domain architecture, ABC transporter spans 3 to 199; sequence LSGRRVICVR…DSRELRIGGV (197 aa). Position 35-42 (35-42) interacts with ATP; sequence GRNGSGKT.

It belongs to the ABC transporter superfamily. CcmA exporter (TC 3.A.1.107) family. In terms of assembly, the complex is composed of two ATP-binding proteins (CcmA) and two transmembrane proteins (CcmB).

The protein resides in the cell inner membrane. The enzyme catalyses heme b(in) + ATP + H2O = heme b(out) + ADP + phosphate + H(+). Part of the ABC transporter complex CcmAB involved in the biogenesis of c-type cytochromes; once thought to export heme, this seems not to be the case, but its exact role is uncertain. Responsible for energy coupling to the transport system. This chain is Cytochrome c biogenesis ATP-binding export protein CcmA, found in Bradyrhizobium diazoefficiens (strain JCM 10833 / BCRC 13528 / IAM 13628 / NBRC 14792 / USDA 110).